A 135-amino-acid polypeptide reads, in one-letter code: Sex-regulated protein janus-A (135 aa).

K37 serves as a coordination point for substrate. H63 functions as the Proton acceptor in the catalytic mechanism. 104 to 106 serves as a coordination point for substrate; the sequence is SQG.

The protein belongs to the janus family.

JanA and janB regulate somatic sex differentiation. This Drosophila yakuba (Fruit fly) protein is Sex-regulated protein janus-A (janA).